We begin with the raw amino-acid sequence, 454 residues long: tRNA modification GTPase MnmE (454 aa).

Arg-23, Glu-80, and Lys-120 together coordinate (6S)-5-formyl-5,6,7,8-tetrahydrofolate. The region spanning 216 to 377 (GMKVVIAGRP…LRNHLKQSMG (162 aa)) is the TrmE-type G domain. Asn-226 serves as a coordination point for K(+). Residues 226–231 (NAGKSS), 245–251 (TDIAGTT), 270–273 (DTAG), 335–338 (NKAD), and 358–360 (SAR) contribute to the GTP site. Ser-230 serves as a coordination point for Mg(2+). Thr-245, Ile-247, and Thr-250 together coordinate K(+). A Mg(2+)-binding site is contributed by Thr-251. Lys-454 lines the (6S)-5-formyl-5,6,7,8-tetrahydrofolate pocket.

Belongs to the TRAFAC class TrmE-Era-EngA-EngB-Septin-like GTPase superfamily. TrmE GTPase family. As to quaternary structure, homodimer. Heterotetramer of two MnmE and two MnmG subunits. The cofactor is K(+).

It is found in the cytoplasm. Functionally, exhibits a very high intrinsic GTPase hydrolysis rate. Involved in the addition of a carboxymethylaminomethyl (cmnm) group at the wobble position (U34) of certain tRNAs, forming tRNA-cmnm(5)s(2)U34. The protein is tRNA modification GTPase MnmE of Salmonella arizonae (strain ATCC BAA-731 / CDC346-86 / RSK2980).